The following is a 708-amino-acid chain: Chaperonin-containing T-complex member BBS12 (708 aa).

This sequence belongs to the TCP-1 chaperonin family. BBS12 subfamily. In terms of assembly, component of the chaperonin-containing T-complex (TRiC), a heterooligomeric complex of about 850 to 900 kDa that forms two stacked rings, 12 to 16 nm in diameter. Interacts with MKKS.

The protein resides in the cell projection. Its subcellular location is the cilium. In terms of biological role, component of the chaperonin-containing T-complex (TRiC), a molecular chaperone complex that assists the folding of proteins upon ATP hydrolysis. As part of the TRiC complex may play a role in the assembly of BBSome, a complex involved in ciliogenesis regulating transports vesicles to the cilia. Involved in adipogenic differentiation. The polypeptide is Chaperonin-containing T-complex member BBS12 (Bbs12) (Mus musculus (Mouse)).